A 207-amino-acid polypeptide reads, in one-letter code: Cytochrome c biogenesis ATP-binding export protein CcmA (207 aa).

The region spanning 4 to 207 (LEARELLCER…RISLTQTRAA (204 aa)) is the ABC transporter domain. An ATP-binding site is contributed by 36-43 (GSNGAGKT).

The protein belongs to the ABC transporter superfamily. CcmA exporter (TC 3.A.1.107) family. In terms of assembly, the complex is composed of two ATP-binding proteins (CcmA) and two transmembrane proteins (CcmB).

Its subcellular location is the cell inner membrane. It catalyses the reaction heme b(in) + ATP + H2O = heme b(out) + ADP + phosphate + H(+). Part of the ABC transporter complex CcmAB involved in the biogenesis of c-type cytochromes; once thought to export heme, this seems not to be the case, but its exact role is uncertain. Responsible for energy coupling to the transport system. This Shigella flexneri protein is Cytochrome c biogenesis ATP-binding export protein CcmA.